The primary structure comprises 3232 residues: D-lysergyl-peptide-synthetase subunit 1 (3232 aa).

The tract at residues 90–474 (GCLTYDEMSI…LGRKDDQVKI (385 aa)) is adenylation (A) domain 1. Residues 617–686 (REKLLQGCFA…TLREIVIVST (70 aa)) enclose the Carrier 1 domain. An O-(pantetheine 4'-phosphoryl)serine modification is found at S649. The segment at 731-1122 (EDIYPCTHLQ…EHILTQIHSN (392 aa)) is condensation (C) domain 1. The adenylation (A) domain 2 stretch occupies residues 1165–1572 (QAKCQAQPDA…RRKDAQVKIR (408 aa)). The region spanning 1717 to 1785 (TEHEISAIWA…TIRKLALARG (69 aa)) is the Carrier 2 domain. Position 1749 is an O-(pantetheine 4'-phosphoryl)serine (S1749). Residues 1835–2252 (ERIYPCSPIQ…ALPVLDEDQM (418 aa)) form a condensation (C) domain 2 region. Residues 2276–2675 (QQCLRCPDSP…GRNDDQVKVR (400 aa)) form an adenylation (A) domain 3 region. A Carrier 3 domain is found at 2810 to 2878 (MEAELQRLVG…RVSDLARIVE (69 aa)). An O-(pantetheine 4'-phosphoryl)serine modification is found at S2842. The tract at residues 2943–3218 (LYFSKPVASE…LLHWLHQQHI (276 aa)) is cyclization (Cyc) domain.

Belongs to the NRP synthetase family.

It participates in alkaloid biosynthesis; ergot alkaloid biosynthesis. Its function is as follows. D-lysergyl-peptide-synthetase subunit 1; part of the gene cluster that mediates the biosynthesis of fungal ergot alkaloid. DmaW catalyzes the first step of ergot alkaloid biosynthesis by condensing dimethylallyl diphosphate (DMAP) and tryptophan to form 4-dimethylallyl-L-tryptophan. The second step is catalyzed by the methyltransferase easF that methylates 4-dimethylallyl-L-tryptophan in the presence of S-adenosyl-L-methionine, resulting in the formation of 4-dimethylallyl-L-abrine. The catalase easC and the FAD-dependent oxidoreductase easE then transform 4-dimethylallyl-L-abrine to chanoclavine-I which is further oxidized by easD in the presence of NAD(+), resulting in the formation of chanoclavine-I aldehyde. Agroclavine dehydrogenase easG then mediates the conversion of chanoclavine-I aldehyde to agroclavine via a non-enzymatic adduct reaction: the substrate is an iminium intermediate that is formed spontaneously from chanoclavine-I aldehyde in the presence of glutathione. The presence of easA is not required to complete this reaction. Further conversion of agroclavine to paspalic acid is a two-step process involving oxidation of agroclavine to elymoclavine and of elymoclavine to paspalic acid, the second step being performed by the elymoclavine oxidase cloA. Paspalic acid is then further converted to D-lysergic acid. Ergopeptines are assembled from D-lysergic acid and three different amino acids by the D-lysergyl-peptide-synthetases composed each of a monomudular and a trimodular nonribosomal peptide synthetase subunit. LpsB and lpsC encode the monomodular subunits responsible for D-lysergic acid activation and incorporation into the ergopeptine backbone. LpsA1 and A2 subunits encode the trimodular nonribosomal peptide synthetase assembling the tripeptide portion of ergopeptines. LpsA1 is responsible for formation of the major ergopeptine, ergotamine, and lpsA2 for alpha-ergocryptine, the minor ergopeptine of the total alkaloid mixture elaborated by C.purpurea. D-lysergyl-tripeptides are assembled by the nonribosomal peptide synthetases and released as N-(D-lysergyl-aminoacyl)-lactams. Cyclolization of the D-lysergyl-tripeptides is performed by the Fe(2+)/2-ketoglutarate-dependent dioxygenase easH which introduces a hydroxyl group into N-(D-lysergyl-aminoacyl)-lactam at alpha-C of the aminoacyl residue followed by spontaneous condensation with the terminal lactam carbonyl group. The protein is D-lysergyl-peptide-synthetase subunit 1 of Claviceps purpurea (Ergot fungus).